A 1044-amino-acid chain; its full sequence is Isoleucine--tRNA ligase (1044 aa).

The 'HIGH' region signature appears at 48–58 (PFATGLPHFGH). A 'KMSKS' region motif is present at residues 594-598 (KMSKS). Lys597 lines the ATP pocket.

This sequence belongs to the class-I aminoacyl-tRNA synthetase family. IleS type 2 subfamily. As to quaternary structure, monomer. It depends on Zn(2+) as a cofactor.

It is found in the cytoplasm. It catalyses the reaction tRNA(Ile) + L-isoleucine + ATP = L-isoleucyl-tRNA(Ile) + AMP + diphosphate. Catalyzes the attachment of isoleucine to tRNA(Ile). As IleRS can inadvertently accommodate and process structurally similar amino acids such as valine, to avoid such errors it has two additional distinct tRNA(Ile)-dependent editing activities. One activity is designated as 'pretransfer' editing and involves the hydrolysis of activated Val-AMP. The other activity is designated 'posttransfer' editing and involves deacylation of mischarged Val-tRNA(Ile). This is Isoleucine--tRNA ligase from Borrelia duttonii (strain Ly).